The chain runs to 325 residues: Forkhead box protein B1 (325 aa).

A DNA-binding region (fork-head) is located at residues 12-103 (QKPPYSYISL…GDMFENGSFL (92 aa)). Residues 284-309 (LSNSPPSLSPTSSQTATSQSSPATPS) are compositionally biased toward low complexity. The disordered stretch occupies residues 284 to 325 (LSNSPPSLSPTSSQTATSQSSPATPSETLTSPASALHSVAVH).

It is found in the nucleus. Functionally, transcription factor expressed by neural progenitor cells in specific regions of the embryonic neuroepithelium. Essential for the mammillary nuclei maintenance. Negatively regulates the proliferation of oligodendrocyte progenitors and promotes oligodendrocyte maturation. Also expressed in mammary glands, plays a role in lactation, controls development of mammary glands and the inferior colliculi of the midbrain in the central nervous system that regulates the milk-ejection reflex. The protein is Forkhead box protein B1 (FOXB1) of Homo sapiens (Human).